The sequence spans 184 residues: Muscle-specific protein 20 (184 aa).

Positions 17–122 constitute a Calponin-homology (CH) domain; sequence PEMDKEAQEW…NTIFALGRAT (106 aa). The Calponin-like repeat unit spans residues 157–181; it reads VGLQAGSNKGATQAGQNLGAGRKIL.

This sequence belongs to the calponin family. In terms of tissue distribution, found in synchronous muscle; not found in asynchronous indirect flight muscle.

The protein is Muscle-specific protein 20 (Mp20) of Drosophila melanogaster (Fruit fly).